A 301-amino-acid polypeptide reads, in one-letter code: MKKVKVCSPGTSANLGPGYDIFGLALSKPYDILEVEKTEKGIIISVEGEKAEEIPTNVDENTAGVVAKKMMEDFNIQSGIHIHINKGIKPGSGLGSSSASCAGVAFALNELFELKLSKLELVKYSSLGEAVAAGAPHADNVAPAIFGGFTLTTSYDPLEVLHIPVDIEVLVALPNIQVSTKTAREILPKEIPIKYMVNNVGKAAGMVYALYNNDLELFGRYMSKDCVVEPCRANLIDGYAEVKEKVKDLVYGITISGSGPAIITIPKKEHVIDIENIFKEVWNCPVYYTKVGPGCYVEEIE.

ATP is bound at residue 89–99; the sequence is KPGSGLGSSSA.

Belongs to the GHMP kinase family. Homoserine kinase subfamily.

It is found in the cytoplasm. The enzyme catalyses L-homoserine + ATP = O-phospho-L-homoserine + ADP + H(+). It participates in amino-acid biosynthesis; L-threonine biosynthesis; L-threonine from L-aspartate: step 4/5. Its function is as follows. Catalyzes the ATP-dependent phosphorylation of L-homoserine to L-homoserine phosphate. The polypeptide is Homoserine kinase (Methanococcus maripaludis (strain C5 / ATCC BAA-1333)).